The following is a 6885-amino-acid chain: Nesprin-2 (6885 aa).

Positions 1-286 (MASSPELPTE…YVAQFLQYSK (286 aa)) are actin-binding. Residues 1–6834 (MASSPELPTE…QRSFLSRVVR (6834 aa)) lie on the Cytoplasmic side of the membrane. Calponin-homology (CH) domains lie at 31–136 (DTQK…LHFH) and 181–286 (MSAR…QYSK). Spectrin repeat units lie at residues 297-378 (GKVK…HQIN), 379-472 (AWKI…RINN), 473-575 (ILEK…KNIY), 576-680 (NVKS…KQDQ), 735-838 (VAKD…KNLT), 839-932 (DVSP…LHHE), and 933-1034 (LSLY…KCAS). Positions 297 to 6782 (GKVKDAMGWL…PASPLPSFDE (6486 aa)) form a coiled coil. The residue at position 841 (S841) is a Phosphoserine. N6-acetyllysine is present on K955. The span at 1042 to 1059 (PTAGGTSKNEGTITTSEN) shows a compositional bias: polar residues. The interval 1042–1084 (PTAGGTSKNEGTITTSENRGGDPHSEAPFAKSDNQPSTEKAME) is disordered. Spectrin repeat units follow at residues 1121–1212 (TYRD…TLNT), 1263–1323 (NIQD…DTLK), 1324–1419 (ALED…YGVQ), 1420–1524 (EEFT…ALVT), 1525–1636 (ECLE…KTED), 1637–1738 (YYEN…TGES), 1739–1830 (NCHA…TKKS), 1831–1938 (VLQD…AKEL), 1939–2036 (EDSL…EEED), 2037–2132 (KLLP…LAST), 2133–2243 (YLSH…SVQN), and 2244–2360 (LDGH…LNSI). Positions 2368-2382 (EKKGKFTLPGREKQA) are enriched in basic and acidic residues. The segment at 2368–2394 (EKKGKFTLPGREKQATSDVQESTQESA) is disordered. Residues 2383–2393 (TSDVQESTQES) are compositionally biased toward polar residues. Spectrin repeat units follow at residues 2432 to 2513 (DERK…TLKK), 2514 to 2620 (NKES…KYSQ), 2621 to 2717 (QVVE…ETLE), 2718 to 2831 (PLHL…QLEF), 2832 to 2933 (KLEE…FIQN), 2934 to 3036 (TCNE…EKIK), 3037 to 3142 (QLDT…NMVL), 3143 to 3248 (ELSP…DLRT), 3249 to 3352 (NVLN…AQET), 3353 to 3465 (EAER…MWCE), 3466 to 3573 (ELKQ…KVQK), 3574 to 3679 (NKEL…SNEV), 3680 to 3777 (LKSS…ECRT), 3778 to 3880 (SQLN…KIME), 3881 to 3986 (SLPQ…VTQE), and 3987 to 4086 (QNEL…LPAV). The residue at position 2781 (S2781) is a Phosphoserine. 2 stretches are compositionally biased toward basic and acidic residues: residues 4073–4083 (QEQEGVERDRL) and 4093–4102 (VAERDASERK). Disordered stretches follow at residues 4073 to 4162 (QEQE…SGTI), 4184 to 4232 (DSLN…KTRP), 4335 to 4363 (EKHSEDQHPTILKKSSEPEHQEALQPVNL), and 4416 to 4448 (HDNDTTQESSASNQASSPENDVPDSILSPQGQN). The residue at position 4108 (S4108) is a Phosphoserine. 2 stretches are compositionally biased toward basic and acidic residues: residues 4122 to 4134 (SSVKSDNGDEKAE) and 4144 to 4155 (WKHDKDMEEDRA). The stretch at 4229–4348 (KTRPEPTEVL…EDQHPTILKK (120 aa)) is one Spectrin 36 repeat. Residues 4335-4356 (EKHSEDQHPTILKKSSEPEHQE) show a composition bias toward basic and acidic residues. Residues 4421–4434 (TQESSASNQASSPE) show a composition bias toward polar residues. 17 Spectrin repeats span residues 4520–4639 (NMTE…RSYQ), 4640–4727 (NEIK…RARY), 4728–4837 (TELS…QSLL), 4838–4943 (QKWE…QALL), 4944–5051 (KHLL…QEKL), 5052–5164 (HQLQ…KIQH), 5165–5266 (LEQL…TQVN), 5267–5391 (QLKT…KAYS), 5392–5487 (NAHG…MLLV), 5488–5589 (KANE…CSEL), 5590–5704 (QGIG…QWQD), 5705–5799 (FTTS…PQLA), 5800–5907 (EMIK…RVAI), 5908–6017 (RKQE…VKKL), 6018–6135 (KETF…EETW), 6136–6243 (RLWQ…LRHF), and 6244–6355 (TNQR…PGLE). S5785 bears the Phosphoserine mark. Over residues 6354–6367 (LEDEKEASENETDM) the composition is skewed to acidic residues. The segment at 6354 to 6508 (LEDEKEASEN…GTDGGKEGPR (155 aa)) is disordered. Residues S6361, S6384, S6411, S6428, S6429, S6430, and S6459 each carry the phosphoserine modification. The span at 6368–6384 (EDPREIQTDSWRKRGES) shows a compositional bias: basic and acidic residues. 3 Spectrin repeats span residues 6461–6549 (SCPE…KLKI), 6550–6665 (KQNL…QCQD), and 6666–6782 (FHQL…SFDE). Positions 6463–6474 (PEHHYKQMEGDR) are enriched in basic and acidic residues. Positions 6477–6489 (PPVPPASSTPYKP) are enriched in pro residues. Positions 6490-6499 (PYGKLLLPPG) are enriched in low complexity. Positions 6769–6824 (GTQNPASPLPSFDEVDSGDQPPATSVPAPRAKQFRAVRTTEGEEETESRVPGSTRP) are disordered. One can recognise a KASH domain in the interval 6826 to 6885 (RSFLSRVVRAALPLQLLLLLLLLLACLLPSSEEDYSCTQANNFARSFYPMLRYTNGPPPT). A helical; Anchor for type IV membrane protein transmembrane segment spans residues 6835–6855 (AALPLQLLLLLLLLLACLLPS). Over 6856 to 6885 (SEEDYSCTQANNFARSFYPMLRYTNGPPPT) the chain is Perinuclear space. Residues 6872–6885 (FYPMLRYTNGPPPT) are sufficient for interaction with SUN2.

Belongs to the nesprin family. As to quaternary structure, core component of LINC complexes which are composed of inner nuclear membrane SUN domain-containing proteins coupled to outer nuclear membrane KASH domain-containing nesprins. SUN and KASH domain-containing proteins seem to bind each other promiscuously; however, some LINC complex constituents are tissue- or cell type-specific. At least SUN1/2-containing core LINC complexes are proposed to be hexameric composed of three protomers of each KASH and SUN domain-containing protein. The SUN2:SYNE2/KASH2 complex is a heterohexamer; the homotrimeric cloverleave-like conformation of the SUN domain is a prerequisite for LINC complex formation in which three separate SYNE2/KASH2 peptides bind at the interface of adjacent SUN domains. Interacts with EMD, LMNA, MKS3 and F-actin via its N-terminal domain. Interacts with DCTN1 and DYNC1I1/2; suggesting the association with the dynein-dynactin motor complex. Associates with kinesin motor complexes. Interacts with TMEM67. Interacts (via KASH domain) with TMEM258. Interacts with BROX; this interaction promotes SYN2 ubiquitination and facilitates the relaxation of mechanical stress imposed by compressive actin fibers at the rupture site. The disulfid bond with SUN2 is required for stability of the SUN2:SYNE2/KASH2 LINC complex under tensile forces though not required for the interaction. In terms of processing, ubiquitinated, targeting it for degradation. As to expression, widely expressed, with higher level in kidney, adult and fetal liver, stomach and placenta. Weakly expressed in skeletal muscle and brain. Isoform 5 is highly expressed in pancreas, skeletal muscle and heart.

Its subcellular location is the nucleus outer membrane. The protein localises to the sarcoplasmic reticulum membrane. The protein resides in the cell membrane. It is found in the cytoplasm. It localises to the cytoskeleton. Its subcellular location is the mitochondrion. The protein localises to the nucleus. The protein resides in the nucleoplasm. It is found in the myofibril. It localises to the sarcomere. Its subcellular location is the z line. The protein localises to the cell junction. The protein resides in the focal adhesion. Multi-isomeric modular protein which forms a linking network between organelles and the actin cytoskeleton to maintain the subcellular spatial organization. As a component of the LINC (LInker of Nucleoskeleton and Cytoskeleton) complex involved in the connection between the nuclear lamina and the cytoskeleton. The nucleocytoplasmic interactions established by the LINC complex play an important role in the transmission of mechanical forces across the nuclear envelope and in nuclear movement and positioning. Specifically, SYNE2 and SUN2 assemble in arrays of transmembrane actin-associated nuclear (TAN) lines which are bound to F-actin cables and couple the nucleus to retrograde actin flow during actin-dependent nuclear movement. May be involved in nucleus-centrosome attachment. During interkinetic nuclear migration (INM) at G2 phase and nuclear migration in neural progenitors its LINC complex association with SUN1/2 and probable association with cytoplasmic dynein-dynactin motor complexes functions to pull the nucleus toward the centrosome; SYNE1 and SYNE2 may act redundantly. During INM at G1 phase mediates respective LINC complex association with kinesin to push the nucleus away from the centrosome. Involved in nuclear migration in retinal photoreceptor progenitors. Required for centrosome migration to the apical cell surface during early ciliogenesis. Facilitates the relaxation of mechanical stress imposed by compressive actin fibers at the rupture site through its nteraction with SYN2. The sequence is that of Nesprin-2 from Homo sapiens (Human).